The chain runs to 83 residues: Small ribosomal subunit protein bS16 (83 aa).

Belongs to the bacterial ribosomal protein bS16 family.

The polypeptide is Small ribosomal subunit protein bS16 (Syntrophus aciditrophicus (strain SB)).